Consider the following 673-residue polypeptide: uncharacterized protein (673 aa).

Positions 1–24 (MKIHNIIKIIIVVCLEGFALTSFA) are cleaved as a signal peptide. The next 6 helical transmembrane spans lie at 224–244 (NAIGAALILYVMFFAFNMVLN), 253–273 (IALFVIKLLFVTYFSIGLGPL), 410–430 (IILISGLVFAVIFLSILLYFI), 436–456 (CMITIYVMTYVSPIFIPMMLF), 469–489 (VSLSCALQPAVVAGFIALLIT), and 562–582 (VVSILAELLCVLVFSVIFYYF). Positions 624-673 (AQATQGKPPSSGDMPGDGGSKRSEGQKGDDSFISSGGNSSGDSLSSSGGK) are disordered. The segment covering 642 to 653 (GSKRSEGQKGDD) has biased composition (basic and acidic residues). A compositionally biased stretch (low complexity) spans 654–673 (SFISSGGNSSGDSLSSSGGK).

Belongs to the TrbL/VirB6 family.

The protein localises to the cell membrane. This is an uncharacterized protein from Rickettsia bellii (strain RML369-C).